The following is a 255-amino-acid chain: NADH dehydrogenase [ubiquinone] flavoprotein 2, mitochondrial (255 aa).

A mitochondrion-targeting transit peptide spans 1–35 (MLARLAAKRLLEIRQVFRQPTSQVTRSLSTALNYH). Residues C130, C135, C171, and C175 each coordinate [2Fe-2S] cluster. A disordered region spans residues 214-255 (RKGEKPPHGTQNPKRIKCGPEGGNKTLLGEPKPPQFRDLDAC).

It belongs to the complex I 24 kDa subunit family. As to quaternary structure, complex I is composed of at least 49 different subunits. This is a component of the flavoprotein-sulfur (FP) fragment of the enzyme. It depends on [2Fe-2S] cluster as a cofactor.

The protein resides in the mitochondrion inner membrane. The enzyme catalyses a ubiquinone + NADH + 5 H(+)(in) = a ubiquinol + NAD(+) + 4 H(+)(out). In terms of biological role, core subunit of the mitochondrial membrane respiratory chain NADH dehydrogenase (Complex I) that is believed to belong to the minimal assembly required for catalysis. Complex I functions in the transfer of electrons from NADH to the respiratory chain. The immediate electron acceptor for the enzyme is believed to be ubiquinone. The chain is NADH dehydrogenase [ubiquinone] flavoprotein 2, mitochondrial from Arabidopsis thaliana (Mouse-ear cress).